We begin with the raw amino-acid sequence, 333 residues long: Phosphate acetyltransferase (333 aa).

Belongs to the phosphate acetyltransferase and butyryltransferase family. As to quaternary structure, homodimer.

Its subcellular location is the cell membrane. The catalysed reaction is acetyl-CoA + phosphate = acetyl phosphate + CoA. Its pathway is metabolic intermediate biosynthesis; acetyl-CoA biosynthesis; acetyl-CoA from acetate: step 2/2. In Methanosarcina thermophila, this protein is Phosphate acetyltransferase (pta).